The following is a 25-amino-acid chain: Flagellar filament core protein flaB1 (25 aa).

This sequence belongs to the bacterial flagellin family. In terms of assembly, the flagellum consists of an outer layer composed of two sheath proteins, flaA1 (44 kDa) and flaA2 (35 kDa) around a core that contains three proteins flaB1 (37 kDa), flaB2 (34 kDa) and flaB3 (32 kDa).

It localises to the periplasmic flagellum. It is found in the periplasm. In terms of biological role, component of the core of the flagella. The protein is Flagellar filament core protein flaB1 (flaB1) of Brachyspira hyodysenteriae (Treponema hyodysenteriae).